Reading from the N-terminus, the 522-residue chain is BAR/IMD domain-containing adapter protein 2-like 2 (522 aa).

An IMD domain is found at 1 to 239; that stretch reads MAPEMDQFYR…HSPGLLGPAL (239 aa). 2 disordered regions span residues 220-325 and 404-502; these read SEAS…GGGG and PMSP…GTNP. 3 positions are modified to phosphoserine: serine 231, serine 272, and serine 303. Polar residues predominate over residues 297–317; that stretch reads RTPSASSLYASSTQRSRSNSF. The 64-residue stretch at 324–387 folds into the SH3 domain; that stretch reads GGARRVRALV…PEAYVKPVEE (64 aa). Residues 443–456 show a composition bias toward low complexity; sequence SQSRSRTPSRVPSR. The segment covering 457-466 has biased composition (pro residues); the sequence is APSPAPPPLP. Phosphoserine is present on residues serine 472 and serine 475.

Expressed in the epithelial layer of the intestine and in the kidney.

Its subcellular location is the cell membrane. It localises to the cell junction. The protein resides in the cytoplasmic vesicle membrane. In terms of biological role, phosphoinositides-binding protein that induces the formation of planar or gently curved membrane structures. Binds to phosphoinositides, including to phosphatidylinositol 4,5-bisphosphate (PtdIns(4,5)P2) headgroups. There seems to be no clear preference for a specific phosphoinositide. The chain is BAR/IMD domain-containing adapter protein 2-like 2 (Baiap2l2) from Mus musculus (Mouse).